A 537-amino-acid polypeptide reads, in one-letter code: MNKLVECVPNFSEGRDQTIIDAISKAIRDTAGCTLLDVDPGKSTNRTVYTFVGCPDSIVNGAINATKVAFKLIDMTKHHGEHPRMGALDVCPFVPVRNVTMEECVNCSKEFGKRISEEIGVPIFLYEEASTQSYRKQLKQIRQGEYEGLEEKLKEEKWKPDFGPAKFIPSYGASVTGARSFLIAYNVNILGTKEQAHRIALNVREAGRGDNEPGRLKFLKGIGWFVDEYNLAQVSMNLDNYRETGVHTVFEECSKDARELNLGVAGSEIVGLVPLEAILMAADYYIAKENLFIIDEALKVRLAIERLGLSSCSFFDPKKRIIDYMVQEDLKVTQPLASMSVRGFVELLGSRTPAPGGGSASALIAAMGAGLGAMTGWMTFGKKKFEALDSIMRELLPPLDKAMRDLIPYIDADTNAFNDYIKAMGTPKGPQRDIAIDKALKQAINIPLSTMKISNTCWGPLLKMAQYGNLASKSDLEVGCKSLETGIWGAHRNVSINLLDCKDAQFVESTTKEANEILKNAQESLQKVLEILSNRKE.

Residues 1–181 are formiminotransferase N-subdomain; sequence MNKLVECVPN…GASVTGARSF (181 aa). Residue His-82 is the For formimidoyltransferase activity of the active site. A folate-binding site is contributed by 163–172; that stretch reads GPAKFIPSYG. The tract at residues 182-326 is formiminotransferase C-subdomain; it reads LIAYNVNILG…PKKRIIDYMV (145 aa). The tract at residues 327-335 is linker; it reads QEDLKVTQP. Residues 336–537 form a cyclodeaminase/cyclohydrolase region; the sequence is LASMSVRGFV…VLEILSNRKE (202 aa). Asp-413 functions as the For cyclodeaminase activity in the catalytic mechanism.

It in the C-terminal section; belongs to the cyclodeaminase/cyclohydrolase family. This sequence in the N-terminal section; belongs to the formiminotransferase family. Homooctamer, including four polyglutamate binding sites. The subunits are arranged as a tetramer of dimers, and form a planar ring-shaped structure.

It localises to the cytoplasm. The protein localises to the cytosol. It is found in the golgi apparatus. Its subcellular location is the cytoskeleton. The protein resides in the microtubule organizing center. It localises to the centrosome. The protein localises to the centriole. It catalyses the reaction 5-formimidoyltetrahydrofolate + L-glutamate = N-formimidoyl-L-glutamate + (6S)-5,6,7,8-tetrahydrofolate. It carries out the reaction 5-formimidoyltetrahydrofolate + 2 H(+) = (6R)-5,10-methenyltetrahydrofolate + NH4(+). Its pathway is amino-acid degradation; L-histidine degradation into L-glutamate; L-glutamate from N-formimidoyl-L-glutamate (transferase route): step 1/1. In terms of biological role, folate-dependent enzyme, that displays both transferase and deaminase activity. Serves to channel one-carbon units from formiminoglutamate to the folate pool. This is Formimidoyltransferase-cyclodeaminase (ftcd) from Dictyostelium discoideum (Social amoeba).